Consider the following 2259-residue polypeptide: Putative Polycomb group protein ASXL3 (2259 aa).

One can recognise an HTH HARE-type domain in the interval Arg10 to Glu83. The segment at Val181–Lys230 is disordered. A compositionally biased stretch (basic and acidic residues) spans Lys202–His215. The segment covering Lys218–Gln227 has biased composition (polar residues). One can recognise a DEUBAD domain in the interval Pro253 to Gly362. 10 disordered regions span residues Ser364 to Ala399, Cys607 to Ala643, Glu703 to Pro810, Ser857 to Ile1012, Ser1025 to Ala1049, Arg1126 to Glu1150, Leu1433 to Val1462, Asp1614 to Ala1643, Asp1687 to Pro1719, and Asn1993 to Arg2075. Polar residues-rich tracts occupy residues Cys607–Ser617, Gly630–Ala643, and Glu703–Ser717. A compositionally biased stretch (low complexity) spans Leu722 to Pro741. Composition is skewed to polar residues over residues Lys770 to Pro781 and Gln926 to Ser945. Composition is skewed to basic and acidic residues over residues Asp949–Ser985 and Pro995–Arg1006. The segment covering Arg1034–Ser1043 has biased composition (low complexity). Over residues Asn1437–Thr1448 the composition is skewed to polar residues. Residues Glu1699 to Pro1719 show a composition bias toward polar residues. Positions Pro2023 to Pro2055 are enriched in pro residues. The segment at Glu2221–Val2258 adopts a PHD-type; atypical zinc-finger fold.

It belongs to the Asx family. In terms of assembly, core component of the polycomb repressive deubiquitinase (PR-DUB) complex, at least composed of BAP1, one of ASXL1, ASXL2 or (probably) ASXL3, and one of MBD5 or MBD6. Distinct combinations of ASXL and MBD proteins may preferentially bind specific histone modification marks. The PR-DUB core associates with a number of accessory proteins, including FOXK1, FOXK2, KDM1B, HCFC1 and OGT; KDM1B specifically associates with ASXL2 PR-DUB complexes. Interacts (via PHD domain) with MBD5 and MBD6 (via MBD domain); the interaction is probably direct and mediates association of MBD proteins with the PR-DUB core.

The protein localises to the nucleus. In terms of biological role, putative Polycomb group (PcG) protein. PcG proteins act by forming multiprotein complexes, which are required to maintain the transcriptionally repressive state of homeotic genes throughout development. PcG proteins are not required to initiate repression, but to maintain it during later stages of development. They probably act via methylation of histones, rendering chromatin heritably changed in its expressibility. Non-catalytic component of the PR-DUB complex, a complex that specifically mediates deubiquitination of histone H2A monoubiquitinated at 'Lys-119' (H2AK119ub1). The PR-DUB complex is an epigenetic regulator of gene expression and acts as a transcriptional coactivator, affecting genes involved in development, cell communication, signaling, cell proliferation and cell viability. ASXL1, ASXL2 and ASXL3 function redundantly in the PR-DUB complex and are essential for chromatin recruitment and transcriptional activation of associated genes. This is Putative Polycomb group protein ASXL3 (Asxl3) from Mus musculus (Mouse).